Here is a 301-residue protein sequence, read N- to C-terminus: Tyrosine recombinase XerD (301 aa).

The 84-residue stretch at 7-90 (QFHTTILEQF…ALKVFFLFLK (84 aa)) folds into the Core-binding (CB) domain. Positions 109–294 (RLPSVLTPQE…AADSLIEKFL (186 aa)) constitute a Tyr recombinase domain. Active-site residues include R153, K175, H246, R249, and H272. Catalysis depends on Y281, which acts as the O-(3'-phospho-DNA)-tyrosine intermediate.

It belongs to the 'phage' integrase family. XerD subfamily. Forms a cyclic heterotetrameric complex composed of two molecules of XerC and two molecules of XerD.

It localises to the cytoplasm. Functionally, site-specific tyrosine recombinase, which acts by catalyzing the cutting and rejoining of the recombining DNA molecules. The XerC-XerD complex is essential to convert dimers of the bacterial chromosome into monomers to permit their segregation at cell division. It also contributes to the segregational stability of plasmids. The chain is Tyrosine recombinase XerD from Chlamydia pneumoniae (Chlamydophila pneumoniae).